The following is a 336-amino-acid chain: Methionyl-tRNA formyltransferase (336 aa).

Position 110–113 (110–113 (SLLP)) interacts with (6S)-5,6,7,8-tetrahydrofolate.

It belongs to the Fmt family.

It catalyses the reaction L-methionyl-tRNA(fMet) + (6R)-10-formyltetrahydrofolate = N-formyl-L-methionyl-tRNA(fMet) + (6S)-5,6,7,8-tetrahydrofolate + H(+). In terms of biological role, attaches a formyl group to the free amino group of methionyl-tRNA(fMet). The formyl group appears to play a dual role in the initiator identity of N-formylmethionyl-tRNA by promoting its recognition by IF2 and preventing the misappropriation of this tRNA by the elongation apparatus. The protein is Methionyl-tRNA formyltransferase of Prochlorococcus marinus (strain NATL2A).